The sequence spans 229 residues: LexA repressor (229 aa).

Residues 28–48 (IREIGEALDIRSTNGVNDHLK) constitute a DNA-binding region (H-T-H motif). Active-site for autocatalytic cleavage activity residues include S147 and K184.

Belongs to the peptidase S24 family. In terms of assembly, homodimer.

The enzyme catalyses Hydrolysis of Ala-|-Gly bond in repressor LexA.. Its function is as follows. Represses a number of genes involved in the response to DNA damage (SOS response), including recA and lexA. In the presence of single-stranded DNA, RecA interacts with LexA causing an autocatalytic cleavage which disrupts the DNA-binding part of LexA, leading to derepression of the SOS regulon and eventually DNA repair. The chain is LexA repressor from Anaeromyxobacter dehalogenans (strain 2CP-C).